The following is a 426-amino-acid chain: Glutamate-1-semialdehyde 2,1-aminomutase (426 aa).

The residue at position 265 (lysine 265) is an N6-(pyridoxal phosphate)lysine.

This sequence belongs to the class-III pyridoxal-phosphate-dependent aminotransferase family. HemL subfamily. In terms of assembly, homodimer. Pyridoxal 5'-phosphate is required as a cofactor.

The protein resides in the cytoplasm. The enzyme catalyses (S)-4-amino-5-oxopentanoate = 5-aminolevulinate. The protein operates within porphyrin-containing compound metabolism; protoporphyrin-IX biosynthesis; 5-aminolevulinate from L-glutamyl-tRNA(Glu): step 2/2. This Escherichia coli O7:K1 (strain IAI39 / ExPEC) protein is Glutamate-1-semialdehyde 2,1-aminomutase.